Consider the following 453-residue polypeptide: tRNA-2-methylthio-N(6)-dimethylallyladenosine synthase (453 aa).

The region spanning 11-131 (KSFHVKSFGC…LPQLVADAAE (121 aa)) is the MTTase N-terminal domain. [4Fe-4S] cluster contacts are provided by C20, C56, C94, C167, C171, and C174. A Radical SAM core domain is found at 153 to 385 (RRQGPTAFLT…QALLNEQQHR (233 aa)). A TRAM domain is found at 388 to 449 (LATVGKRCEV…PNSLSGALVE (62 aa)).

This sequence belongs to the methylthiotransferase family. MiaB subfamily. In terms of assembly, monomer. [4Fe-4S] cluster serves as cofactor.

It localises to the cytoplasm. It catalyses the reaction N(6)-dimethylallyladenosine(37) in tRNA + (sulfur carrier)-SH + AH2 + 2 S-adenosyl-L-methionine = 2-methylsulfanyl-N(6)-dimethylallyladenosine(37) in tRNA + (sulfur carrier)-H + 5'-deoxyadenosine + L-methionine + A + S-adenosyl-L-homocysteine + 2 H(+). In terms of biological role, catalyzes the methylthiolation of N6-(dimethylallyl)adenosine (i(6)A), leading to the formation of 2-methylthio-N6-(dimethylallyl)adenosine (ms(2)i(6)A) at position 37 in tRNAs that read codons beginning with uridine. The polypeptide is tRNA-2-methylthio-N(6)-dimethylallyladenosine synthase (Rhizorhabdus wittichii (strain DSM 6014 / CCUG 31198 / JCM 15750 / NBRC 105917 / EY 4224 / RW1) (Sphingomonas wittichii)).